Reading from the N-terminus, the 138-residue chain is Nucleoside diphosphate kinase (138 aa).

Positions 9, 57, 85, 91, 102, and 112 each coordinate ATP. His115 functions as the Pros-phosphohistidine intermediate in the catalytic mechanism.

This sequence belongs to the NDK family. The cofactor is Mg(2+).

It is found in the cytoplasm. It catalyses the reaction a 2'-deoxyribonucleoside 5'-diphosphate + ATP = a 2'-deoxyribonucleoside 5'-triphosphate + ADP. The catalysed reaction is a ribonucleoside 5'-diphosphate + ATP = a ribonucleoside 5'-triphosphate + ADP. Major role in the synthesis of nucleoside triphosphates other than ATP. The ATP gamma phosphate is transferred to the NDP beta phosphate via a ping-pong mechanism, using a phosphorylated active-site intermediate. This chain is Nucleoside diphosphate kinase, found in Picrophilus torridus (strain ATCC 700027 / DSM 9790 / JCM 10055 / NBRC 100828 / KAW 2/3).